The following is a 922-amino-acid chain: Phosphoenolpyruvate carboxylase (922 aa).

A disordered region spans residues 1–20 (MTKTLHARPSAATDTTFAPP). Catalysis depends on residues histidine 142 and lysine 581.

This sequence belongs to the PEPCase type 1 family. Requires Mg(2+) as cofactor.

The catalysed reaction is oxaloacetate + phosphate = phosphoenolpyruvate + hydrogencarbonate. Forms oxaloacetate, a four-carbon dicarboxylic acid source for the tricarboxylic acid cycle. The protein is Phosphoenolpyruvate carboxylase (ppc) of Methylorubrum extorquens (strain ATCC 14718 / DSM 1338 / JCM 2805 / NCIMB 9133 / AM1) (Methylobacterium extorquens).